The following is a 187-amino-acid chain: MNDLKNAENGPDEADTPQGAPSQEPDPFVVLENLQAENTSLKDKLLRTLADMENLRRRTEKEVADAKTYGVTSFARDMLTFADNLHRALANVPAEARAKAEPAVQTLIEGLQLTERDFASRLERFGVKKIDPAGQKFDPNLHEALFEQPDESVPNGTVTQVIEPGYVIGERVLRPAKVGVSRGGPKG.

A disordered region spans residues 1-26; it reads MNDLKNAENGPDEADTPQGAPSQEPD.

It belongs to the GrpE family. As to quaternary structure, homodimer.

Its subcellular location is the cytoplasm. Functionally, participates actively in the response to hyperosmotic and heat shock by preventing the aggregation of stress-denatured proteins, in association with DnaK and GrpE. It is the nucleotide exchange factor for DnaK and may function as a thermosensor. Unfolded proteins bind initially to DnaJ; upon interaction with the DnaJ-bound protein, DnaK hydrolyzes its bound ATP, resulting in the formation of a stable complex. GrpE releases ADP from DnaK; ATP binding to DnaK triggers the release of the substrate protein, thus completing the reaction cycle. Several rounds of ATP-dependent interactions between DnaJ, DnaK and GrpE are required for fully efficient folding. This Methylocella silvestris (strain DSM 15510 / CIP 108128 / LMG 27833 / NCIMB 13906 / BL2) protein is Protein GrpE.